Consider the following 367-residue polypeptide: Anhydro-N-acetylmuramic acid kinase (367 aa).

An ATP-binding site is contributed by 13 to 20 (GTSMDGAD).

It belongs to the anhydro-N-acetylmuramic acid kinase family.

The enzyme catalyses 1,6-anhydro-N-acetyl-beta-muramate + ATP + H2O = N-acetyl-D-muramate 6-phosphate + ADP + H(+). It participates in amino-sugar metabolism; 1,6-anhydro-N-acetylmuramate degradation. The protein operates within cell wall biogenesis; peptidoglycan recycling. Functionally, catalyzes the specific phosphorylation of 1,6-anhydro-N-acetylmuramic acid (anhMurNAc) with the simultaneous cleavage of the 1,6-anhydro ring, generating MurNAc-6-P. Is required for the utilization of anhMurNAc either imported from the medium or derived from its own cell wall murein, and thus plays a role in cell wall recycling. This is Anhydro-N-acetylmuramic acid kinase from Neisseria meningitidis serogroup C / serotype 2a (strain ATCC 700532 / DSM 15464 / FAM18).